A 159-amino-acid polypeptide reads, in one-letter code: MAKVESFELDHTKVKAPYVRLITVEEGPKGDKISNFDLRLVQPNENAIPTGGLHTIEHLLASLLRDRLDGVIDCSPFGCRTGFHLITWGEHSTTEVAKALRDSLKAIRDDITWEDVPGTTIESCGNYRDHSLFSAQEWCNDILKKGISDDPFDRHVVED.

Fe cation-binding residues include His54, His58, and Cys124.

This sequence belongs to the LuxS family. As to quaternary structure, homodimer. Fe cation serves as cofactor.

The enzyme catalyses S-(5-deoxy-D-ribos-5-yl)-L-homocysteine = (S)-4,5-dihydroxypentane-2,3-dione + L-homocysteine. In terms of biological role, involved in the synthesis of autoinducer 2 (AI-2) which is secreted by bacteria and is used to communicate both the cell density and the metabolic potential of the environment. The regulation of gene expression in response to changes in cell density is called quorum sensing. Catalyzes the transformation of S-ribosylhomocysteine (RHC) to homocysteine (HC) and 4,5-dihydroxy-2,3-pentadione (DPD). This chain is S-ribosylhomocysteine lyase 1, found in Lactobacillus delbrueckii subsp. bulgaricus (strain ATCC BAA-365 / Lb-18).